We begin with the raw amino-acid sequence, 183 residues long: Apo-citrate lyase phosphoribosyl-dephospho-CoA transferase (183 aa).

The protein belongs to the CitX family.

The catalysed reaction is apo-[citrate lyase ACP] + 2'-(5''-triphospho-alpha-D-ribosyl)-3'-dephospho-CoA = holo-[citrate lyase ACP] + diphosphate. In terms of biological role, transfers 2-(5''-triphosphoribosyl)-3'-dephosphocoenzyme-A on a serine residue to the apo-acyl carrier protein (gamma chain) of the citrate lyase to yield holo-acyl carrier protein. The chain is Apo-citrate lyase phosphoribosyl-dephospho-CoA transferase from Citrobacter koseri (strain ATCC BAA-895 / CDC 4225-83 / SGSC4696).